A 176-amino-acid polypeptide reads, in one-letter code: Ribosome maturation factor RimM (176 aa).

Residues 100–173 (KDEYHYHDLI…WLLINPPPGL (74 aa)) enclose the PRC barrel domain.

Belongs to the RimM family. As to quaternary structure, binds ribosomal protein uS19.

The protein localises to the cytoplasm. An accessory protein needed during the final step in the assembly of 30S ribosomal subunit, possibly for assembly of the head region. Essential for efficient processing of 16S rRNA. May be needed both before and after RbfA during the maturation of 16S rRNA. It has affinity for free ribosomal 30S subunits but not for 70S ribosomes. The polypeptide is Ribosome maturation factor RimM (Prochlorococcus marinus (strain NATL2A)).